The following is a 172-amino-acid chain: Protein 3 (172 aa).

The polypeptide is Protein 3 (3) (Northern cereal mosaic virus (NCMV)).